The sequence spans 1064 residues: Serine protease inhibitor Kazal-type 5 (1064 aa).

The N-terminal stretch at 1 to 22 (MKIATVSVLLPLALCLIQDAAS) is a signal peptide. In terms of domain architecture, Kazal-like 1; atypical spans 28–66 (EMCHEFQAFMKNGKLFCPQDKKFFQSLDGIMFINKCATC). Cystine bridges form between C30-C66, C44-C63, C97-C133, C111-C130, C119-C151, C161-C197, C175-C194, C225-C261, C239-C258, C297-C333, C311-C330, C367-C403, C381-C400, C437-C473, C451-C470, C496-C532, C510-C529, C567-C603, C581-C600, C632-C668, and C646-C665. Kazal-like domains are found at residues 91–153 (APTE…ECKS), 155–216 (NPEQ…ETRI), 219–285 (NAEK…KAEE), 291–352 (REIV…ARAR), 361–423 (TSYA…KSRN), 431–489 (ASFE…KAKR), 490–551 (EAAK…EEKG), 561–622 (EAVQ…PRAK), 626–688 (EAEK…EDQR), 701–757 (GNTQ…KNEY), 768–830 (ESGK…EDRS), 843–905 (NDKE…EKSS), 910–971 (NNAK…EKPS), and 987–1048 (SLDS…KCEE). Residues 676 to 688 (NEERKRKEEEDQR) show a composition bias toward basic and acidic residues. Positions 676–705 (NEERKRKEEEDQRNAAGHGSSGGGGGNTQD) are disordered. Cystine bridges form between C707–C743, C721–C740, C774–C810, C788–C807, C849–C885, and C863–C882. The interval 751-775 (AERKNEYSRSRSNGTGSESGKDTCD) is disordered. The segment at 818–849 (AAEKKKKEDEDRSNTGERSNTGERSNDKEDLC) is disordered. Residues 895–905 (ERKKKDEEKSS) are compositionally biased toward basic and acidic residues. The interval 895-915 (ERKKKDEEKSSSKPSNNAKDE) is disordered. 2 disulfide bridges follow: C916–C952 and C930–C949. Basic and acidic residues predominate over residues 967–977 (QEKPSHVRASQ). A disordered region spans residues 967–987 (QEKPSHVRASQEEDSPDSFSS). Intrachain disulfides connect C993-C1028, C1006-C1025, and C1014-C1046. The interval 1041–1064 (RSTGKCEESSTPGTTAASMPPSDE) is disordered.

In terms of processing, proteolytically processed by furin in individual domains (D1, D5, D6, D8 through D11, and D9 through D15) exhibiting various inhibitory potentials for multiple proteases. As to expression, highly expressed in the thymus and stratum corneum. Also found in the oral mucosa, parathyroid gland, Bartholin's glands, tonsils, and vaginal epithelium. Very low levels are detected in lung, kidney, and prostate.

The protein localises to the secreted. Serine protease inhibitor, probably important for the anti-inflammatory and/or antimicrobial protection of mucous epithelia. Contribute to the integrity and protective barrier function of the skin by regulating the activity of defense-activating and desquamation-involved proteases. Inhibits KLK5, it's major target, in a pH-dependent manner. Inhibits KLK7, KLK14 CASP14, and trypsin. The chain is Serine protease inhibitor Kazal-type 5 (SPINK5) from Homo sapiens (Human).